An 840-amino-acid chain; its full sequence is MEKMRGKRIRPRDSGELVEDGRSESERKTRKKENDVVSKGRIGRGRGRGEVSKRSIEIDISNPEKDIKPDGSRKCLGSTCHHCKILTSESDLIFCSKCNKKCYCFDCIKRSYSERTHEEVRAACPFCMMTCICRACLRLPLVIKPPSEKDTDVKLKQLQYLLVKVLPVLKDIYTEQNRELEIESTIRGHPVTEANIKRCKLDPSERIYCDLCRTSIANFHRSCPNKNCSVDICLSCCKELSEGFHQERDGKKNAEGKGYECRIPAGQGKDSDAYVPLHFSTWKLNSDSSIPCPPKECGGCGTSTLELRRLWKRDWVEKLITNAEKCTLNFRPTDVDIVHECSSCSTNSDSIRRQAAFRKNAHDNFLYSPNAVDLAEDDIAHFQFHWMKAEPVIVRNVLEKTSGLSWEPMVMWRACREMDPKRKGTEEETTKVKALDCLDWCEVEINLHQFFEGYLEGRMHKNGWPEMLKLKDWPPSDLFEKRLPRHNAEFIAALPFFDYTDPKSGILNLATRFPEGSLKPDLGPKTYIAYGFHEELNRGDSVTKLHCDISDAVNVLTHTAKVEIPPVKYQNIKVHQKKYAEAMLQKQQYSGQVKEASELENKSMKEVDESKKDLKDKAANEEQSNNSSRPSGSGEAEKVIISKEDNPTQPAVSTSVESIQEQKLDAPKETDGNTNERSKAVHGGAVWDIFRREDVPKLIQFLKRHEHEFRHFNNEPLESVIHPIHDQTMFLSDSQKKQLKEEFDIEPWTFEQHLGEAVFIPAGCPHQVRNRQSCIKVALDFVAPESVEECLRLTQEFRRLPKDHSSSEDKLELKKIALYAASSAIREVKGLMQSSRRSDT.

Residues Met-1–Arg-10 show a composition bias toward basic residues. The interval Met-1–Ser-52 is disordered. Over residues Pro-11–Ser-38 the composition is skewed to basic and acidic residues. Positions 80, 83, 95, 98, 104, 107, 124, and 127 each coordinate Zn(2+). An RING-type; degenerate zinc finger spans residues Cys-80 to Cys-127. Positions Pro-502 to Arg-798 constitute a JmjC domain. Fe cation contacts are provided by His-546 and Asp-548. The interval Lys-594–Ser-678 is disordered. A compositionally biased stretch (basic and acidic residues) spans Glu-595–Asn-620. Over residues Glu-621 to Ser-631 the composition is skewed to polar residues. Positions Glu-635–Asn-646 are enriched in basic and acidic residues. Residues Pro-647–Ile-659 are compositionally biased toward polar residues. Basic and acidic residues predominate over residues Gln-660–Ser-678. His-766 contributes to the Fe cation binding site.

Belongs to the JARID1 histone demethylase family. As to quaternary structure, interacts with RPN1A. Fe(2+) is required as a cofactor. Expressed in seedlings, inflorescences, flowers and siliques, and, at low levels, in roots, leaves (including vascular bundles) and stems. Particularly observed in stomatal guard cells.

It localises to the nucleus. Its subcellular location is the cytoplasm. The catalysed reaction is N(6),N(6)-dimethyl-L-lysyl(9)-[histone H3] + 2-oxoglutarate + O2 = N(6)-methyl-L-lysyl(9)-[histone H3] + formaldehyde + succinate + CO2. It carries out the reaction N(6)-methyl-L-lysyl(9)-[histone H3] + 2-oxoglutarate + O2 = L-lysyl(9)-[histone H3] + formaldehyde + succinate + CO2. The enzyme catalyses N(6),N(6)-dimethyl-L-lysyl(9)-[histone H3] + 2 2-oxoglutarate + 2 O2 = L-lysyl(9)-[histone H3] + 2 formaldehyde + 2 succinate + 2 CO2. Its function is as follows. Histone demethylase that demethylates 'Lys-9' (H3K9me) of histone H3 with a specific activity for H3K9me1 and H3K9me2. No activity on H3K4, H3K27, H3K36, H3R2 and H4R3 methyl marks, but weak activity on H3K9me3. Involved in regulation of gene expression. Regulates flowering time by repressing the major flowering regulator CONSTANS (CO) and promoting FLOWERING LOCUS C (FLC). Exhibits a positive impact on abscisic acid- (ABA), hydrogen peroxide- (H(2)O(2)) and calcium- (Ca(2+)) induced stomatal closure. Promotes stomatal-closure-dependent drought-stress responses through its histone demethylase activity toward at least GOLS2 and RD20 loci, thus protecting them from silencing by removing H3K9me2 marks in drought conditions. Required for plant defenses leading to resistance against the virulent bacterial pathogen Pseudomonas syringae pv. tomato DC3000 (Pst DC3000) via a negative regulation of WRKY25 (a repressor of defense) and by triggering the expression of several pathogenesis-related (PR) proteins (e.g. PR1, PR3, PR4 and PR5). This is Lysine-specific demethylase JMJ27 from Arabidopsis thaliana (Mouse-ear cress).